A 326-amino-acid chain; its full sequence is HTH-type transcriptional regulator SyrM (326 aa).

The HTH lysR-type domain occupies 32–89; it reads IDLNLLVDLEALLQYRHITQAAQHVGRSQPAMSRALSRLRGMLKDDLLVAGSRGLVLT. Residues 49–68 constitute a DNA-binding region (H-T-H motif); that stretch reads ITQAAQHVGRSQPAMSRALS.

It belongs to the LysR transcriptional regulatory family.

Its function is as follows. Acts in trans to stimulate nod gene expression via nodD3 and exo gene expression via SyrA. The sequence is that of HTH-type transcriptional regulator SyrM (syrM) from Rhizobium meliloti (strain 1021) (Ensifer meliloti).